A 165-amino-acid polypeptide reads, in one-letter code: Glucosamine 6-phosphate N-acetyltransferase (165 aa).

Residues 22 to 165 (FKVRPLAKDD…DDCNFMTQRF (144 aa)) form the N-acetyltransferase domain. Substrate-binding positions include threonine 44, 92-95 (KFIH), and 104-106 (EDV). 114–119 (RQKLGA) provides a ligand contact to acetyl-CoA. Substrate-binding positions include 135-136 (YK) and arginine 164.

This sequence belongs to the acetyltransferase family. GNA1 subfamily.

It carries out the reaction D-glucosamine 6-phosphate + acetyl-CoA = N-acetyl-D-glucosamine 6-phosphate + CoA + H(+). It functions in the pathway nucleotide-sugar biosynthesis; UDP-N-acetyl-alpha-D-glucosamine biosynthesis; N-acetyl-alpha-D-glucosamine 1-phosphate from alpha-D-glucosamine 6-phosphate (route I): step 1/2. This is Glucosamine 6-phosphate N-acetyltransferase (gna-1) from Caenorhabditis elegans.